Reading from the N-terminus, the 62-residue chain is Conotoxin reg3.7 (62 aa).

The N-terminal stretch at 1-15 (RVLLTICLLLFPLSA) is a signal peptide. Residues 16–45 (LPLDGDQPADQPARHMQSAERNPRFDPVKR) constitute a propeptide that is removed on maturation. Residues 17–37 (PLDGDQPADQPARHMQSAERN) form a disordered region. 3 cysteine pairs are disulfide-bonded: C46-C60, C47-C58, and C52-C61. C61 bears the Cysteine amide mark.

Belongs to the conotoxin M superfamily. As to expression, expressed by the venom duct.

The protein resides in the secreted. This chain is Conotoxin reg3.7, found in Conus regius (Crown cone).